A 305-amino-acid chain; its full sequence is Methionyl-tRNA formyltransferase (305 aa).

111–114 (SLLP) provides a ligand contact to (6S)-5,6,7,8-tetrahydrofolate.

This sequence belongs to the Fmt family.

It carries out the reaction L-methionyl-tRNA(fMet) + (6R)-10-formyltetrahydrofolate = N-formyl-L-methionyl-tRNA(fMet) + (6S)-5,6,7,8-tetrahydrofolate + H(+). Attaches a formyl group to the free amino group of methionyl-tRNA(fMet). The formyl group appears to play a dual role in the initiator identity of N-formylmethionyl-tRNA by promoting its recognition by IF2 and preventing the misappropriation of this tRNA by the elongation apparatus. The chain is Methionyl-tRNA formyltransferase from Campylobacter jejuni (strain RM1221).